A 133-amino-acid chain; its full sequence is Small ribosomal subunit protein uS8 (133 aa).

The protein belongs to the universal ribosomal protein uS8 family. As to quaternary structure, part of the 30S ribosomal subunit. Contacts proteins S5 and S12.

Functionally, one of the primary rRNA binding proteins, it binds directly to 16S rRNA central domain where it helps coordinate assembly of the platform of the 30S subunit. In Chlamydia abortus (strain DSM 27085 / S26/3) (Chlamydophila abortus), this protein is Small ribosomal subunit protein uS8.